A 936-amino-acid chain; its full sequence is E3 ubiquitin-protein ligase ZNRF3 (936 aa).

The segment at 1-31 is disordered; that stretch reads MRPRSGGRPGATGRRRRRLRRRPRGLRCSRL. The first 55 residues, 1–55, serve as a signal peptide directing secretion; that stretch reads MRPRSGGRPGATGRRRRRLRRRPRGLRCSRLPPPPPLPLLLGLLLAAAGPGAARA. A compositionally biased stretch (basic residues) spans 13–27; the sequence is GRRRRRLRRRPRGLR. Residues 56–219 are Extracellular-facing; it reads KETAFVEVVL…PRQPTEYFDM (164 aa). Residues 220 to 240 traverse the membrane as a helical segment; sequence GIFLAFFVVVSLVCLILLVKI. The Cytoplasmic segment spans residues 241 to 936; it reads KLKQRRSQNS…HSADSSSPGA (696 aa). An RING-type; atypical zinc finger spans residues 293–334; it reads CAICLEKYIDGEELRVIPCTHRFHRKCVDPWLLQHHTCPHCR. Disordered regions lie at residues 608–693, 739–758, 849–875, and 892–936; these read SEAG…SPGA, LYEGSGPAGGEPQSGSSQGL, THSLGSWGGTRGPDTPRPHRGLGATRE, and CPPE…SPGA. Residues 654 to 684 are compositionally biased toward polar residues; that stretch reads SGDQVSTCSLEMNYSSNSSLEHRGPNSSTSE. The segment covering 913–922 has biased composition (low complexity); the sequence is ESSTTATEAA.

The protein belongs to the ZNRF3 family. Interacts with LRP6, FZD4, FZD5, FZD6 and FZD8. Interacts with RSPO1; interaction promotes indirect interaction with LGR4 and membrane clearance of ZNRF3. Also interacts with RSPO2. Interacts with LMBR1L.

The protein resides in the cell membrane. The catalysed reaction is S-ubiquitinyl-[E2 ubiquitin-conjugating enzyme]-L-cysteine + [acceptor protein]-L-lysine = [E2 ubiquitin-conjugating enzyme]-L-cysteine + N(6)-ubiquitinyl-[acceptor protein]-L-lysine.. It functions in the pathway protein modification; protein ubiquitination. Its activity is regulated as follows. Negatively regulated by R-spondin proteins such as RSPO1: interaction with RSPO1 induces the indirect association between ZNRF3 and LGR4, promoting membrane clearance of ZNRF3. E3 ubiquitin-protein ligase that acts as a negative regulator of the Wnt signaling pathway by mediating the ubiquitination and subsequent degradation of Wnt receptor complex components Frizzled and LRP6. Acts on both canonical and non-canonical Wnt signaling pathway. Acts as a tumor suppressor in the intestinal stem cell zone by inhibiting the Wnt signaling pathway, thereby restricting the size of the intestinal stem cell zone. Along with RSPO2 and RNF43, constitutes a master switch that governs limb specification. This chain is E3 ubiquitin-protein ligase ZNRF3 (ZNRF3), found in Homo sapiens (Human).